A 601-amino-acid chain; its full sequence is Proline--tRNA ligase (601 aa).

Belongs to the class-II aminoacyl-tRNA synthetase family. ProS type 1 subfamily. Homodimer.

The protein resides in the cytoplasm. It catalyses the reaction tRNA(Pro) + L-proline + ATP = L-prolyl-tRNA(Pro) + AMP + diphosphate. In terms of biological role, catalyzes the attachment of proline to tRNA(Pro) in a two-step reaction: proline is first activated by ATP to form Pro-AMP and then transferred to the acceptor end of tRNA(Pro). As ProRS can inadvertently accommodate and process non-cognate amino acids such as alanine and cysteine, to avoid such errors it has two additional distinct editing activities against alanine. One activity is designated as 'pretransfer' editing and involves the tRNA(Pro)-independent hydrolysis of activated Ala-AMP. The other activity is designated 'posttransfer' editing and involves deacylation of mischarged Ala-tRNA(Pro). The misacylated Cys-tRNA(Pro) is not edited by ProRS. The sequence is that of Proline--tRNA ligase from Picosynechococcus sp. (strain ATCC 27264 / PCC 7002 / PR-6) (Agmenellum quadruplicatum).